Reading from the N-terminus, the 240-residue chain is Nudix hydrolase 3 (240 aa).

Positions asparagine 50–aspartate 190 constitute a Nudix hydrolase domain. The Nudix box motif lies at glycine 89–glycine 110. Residues glutamate 104 and glutamate 108 each coordinate Mg(2+).

This sequence belongs to the Nudix hydrolase family. PCD1 subfamily. Mn(2+) is required as a cofactor. Requires Mg(2+) as cofactor.

Its function is as follows. Probably mediates the hydrolysis of some nucleoside diphosphate derivatives. The polypeptide is Nudix hydrolase 3 (ndx-3) (Caenorhabditis elegans).